Consider the following 541-residue polypeptide: Interleukin-18 receptor 1 (541 aa).

The first 18 residues, 1–18 (MNCRELPLTLWVLISVST), serve as a signal peptide directing secretion. 2 disulfides stabilise this stretch: cysteine 22–cysteine 41 and cysteine 43–cysteine 81. Residues 22–329 (CTSRPHITVV…ADIPGHVFTR (308 aa)) are Extracellular-facing. Ig-like C2-type domains are found at residues 33–121 (GEPF…SCFT), 133–212 (KKFF…DRSN), and 220–312 (PKLN…KSFI). Residues asparagine 91, asparagine 102, asparagine 150, asparagine 197, asparagine 203, asparagine 236, asparagine 255, and asparagine 297 are each glycosylated (N-linked (GlcNAc...) asparagine). Cystine bridges form between cysteine 119-cysteine 158 and cysteine 140-cysteine 185. A disulfide bridge connects residues cysteine 237 and cysteine 298. Residues 330 to 350 (GMIIAVLILVAVVCLVTVCVI) traverse the membrane as a helical segment. Residues 351–541 (YRVDLVLFYR…PEVLPVLSES (191 aa)) are Cytoplasmic-facing. One can recognise a TIR domain in the interval 373–520 (KTYDAFVSYL…RFWKNLLYLM (148 aa)). Glutamate 455 is an active-site residue.

Belongs to the interleukin-1 receptor family. As to quaternary structure, forms a ternary complex with IL18 and IL18RAP. Within this complex, IL18R1 is involved in ligand-binding and IL18RAP in signaling leading to NF-kappa-B and JNK activation. Interacts with SLC12A3 in peritoneal macrophages; this interaction is increased by IL18 treatment. In terms of processing, N-glycosylated. N-linked glycosyl chains contribute to ligand recognition and intra-receptor interactions required for formation of an active ternary receptor complex. In terms of tissue distribution, highly expressed in leukocytes, spleen, lung. Also expressed, but at lower levels, in liver, small intestine, colon, prostate, thymus, placenta, and heart. Specifically coexpressed with IL18R1 in Th1 cells.

The protein localises to the membrane. The catalysed reaction is NAD(+) + H2O = ADP-D-ribose + nicotinamide + H(+). Within the IL18 receptor complex, responsible for the binding of the pro-inflammatory cytokine IL18, but not IL1A nor IL1B. Involved in IL18-mediated IFNG synthesis from T-helper 1 (Th1) cells. Contributes to IL18-induced cytokine production, either independently of SLC12A3, or as a complex with SLC12A3. This chain is Interleukin-18 receptor 1, found in Homo sapiens (Human).